Reading from the N-terminus, the 593-residue chain is Phosphoinositide phosphatase SAC6 (593 aa).

An SAC domain is found at 128–456; the sequence is LSVAERTTGL…GDDISIQYSG (329 aa). The short motif at 391 to 402 is the Phosphatase catalytic core element; that stretch reads RTNCIDCLDRTN. 2 consecutive transmembrane segments (helical) span residues 526–546 and 555–575; these read AVANFPVALTVILISFWFATM and YKHLLFSLVWAGISVAVAALV.

As to expression, predominantly expressed in flowers.

The protein localises to the endoplasmic reticulum membrane. Phosphoinositide phosphatase that hydrolyzes PtdIns(3)P and PtdIns(4)P. Involved in priming for different defense responses. The polypeptide is Phosphoinositide phosphatase SAC6 (SAC6) (Arabidopsis thaliana (Mouse-ear cress)).